The following is a 99-amino-acid chain: Aspartyl/glutamyl-tRNA(Asn/Gln) amidotransferase subunit C (99 aa).

The protein belongs to the GatC family. In terms of assembly, heterotrimer of A, B and C subunits.

It catalyses the reaction L-glutamyl-tRNA(Gln) + L-glutamine + ATP + H2O = L-glutaminyl-tRNA(Gln) + L-glutamate + ADP + phosphate + H(+). The enzyme catalyses L-aspartyl-tRNA(Asn) + L-glutamine + ATP + H2O = L-asparaginyl-tRNA(Asn) + L-glutamate + ADP + phosphate + 2 H(+). Functionally, allows the formation of correctly charged Asn-tRNA(Asn) or Gln-tRNA(Gln) through the transamidation of misacylated Asp-tRNA(Asn) or Glu-tRNA(Gln) in organisms which lack either or both of asparaginyl-tRNA or glutaminyl-tRNA synthetases. The reaction takes place in the presence of glutamine and ATP through an activated phospho-Asp-tRNA(Asn) or phospho-Glu-tRNA(Gln). This chain is Aspartyl/glutamyl-tRNA(Asn/Gln) amidotransferase subunit C, found in Mycobacterium marinum (strain ATCC BAA-535 / M).